The chain runs to 262 residues: Hydroxyethylthiazole kinase (262 aa).

M50 contributes to the substrate binding site. ATP contacts are provided by R125 and T171. Residue G198 participates in substrate binding.

Belongs to the Thz kinase family. Mg(2+) serves as cofactor.

It catalyses the reaction 5-(2-hydroxyethyl)-4-methylthiazole + ATP = 4-methyl-5-(2-phosphooxyethyl)-thiazole + ADP + H(+). The protein operates within cofactor biosynthesis; thiamine diphosphate biosynthesis; 4-methyl-5-(2-phosphoethyl)-thiazole from 5-(2-hydroxyethyl)-4-methylthiazole: step 1/1. Its function is as follows. Catalyzes the phosphorylation of the hydroxyl group of 4-methyl-5-beta-hydroxyethylthiazole (THZ). This is Hydroxyethylthiazole kinase from Escherichia coli (strain 55989 / EAEC).